Consider the following 328-residue polypeptide: MGPAGCAFTLLLLLGISVCGQPVYSSRVVGGQDAAAGRWPWQVSLHFDHNFICGGSLVSERLILTAAHCIQPTWTTFSYTVWLGSITVGDSRKRVKYYVSKIVIHPKYQDTTADVALLKLSSQVTFTSAILPICLPSVTKQLAIPPFCWVTGWGKVKESSDRDYHSALQEAEVPIIDRQACEQLYNPIGIFLPALEPVIKEDKICAGDTQNMKDSCKGDSGGPLSCHIDGVWIQTGVVSWGLECGKSLPGVYTNVIYYQKWINATISRANNLDFSDFLFPIVLLSLALLRPSCAFGPNTIHRVGTVAEAVACIQGWEENAWRFSPRGR.

The signal sequence occupies residues M1 to G20. A Peptidase S1 domain is found at V28–S267. A disulfide bridge connects residues C53 and C69. Residues H68 and D114 each act as charge relay system in the active site. 3 cysteine pairs are disulfide-bonded: C148/C226, C181/C205, and C216/C244. S220 functions as the Charge relay system in the catalytic mechanism. N263 carries an N-linked (GlcNAc...) asparagine glycan.

Belongs to the peptidase S1 family.

It localises to the secreted. The sequence is that of Serine protease 48 (PRSS48) from Homo sapiens (Human).